The following is a 532-amino-acid chain: MGARASVLSGGELDRWEKIRLRPGGKKKYKLKHIVWASRELERFAVNPSLLETSEGCRQILGQLQPSLQTGSEELKSLFNTVATLYCVHQRIEVKDTKEALEKIEEEQNKSKKKAQQAAADTGNSSKVSQNYPIVQNIQGQMVHQAISPRTLNAWVKVVEEKAFSPEVIPMFSALSEGATPQDLNTMLNTVGGHQAAMQMLKETINEEAAEWDRLHPAQAGPIAPGQMREPRGSDIAGTTSTLQEQIGWMTSNPPIPVGEIYKRWIILGLNKIVRMYSPSSILDIRQGPKEPFRDYVDRFYKTLRAEQASQEVKNWMTETLLVQNANPDCKTILKALGPAATLEEMMTACQGVGGPGHKARVLAEAMSQVTNSTTIMMQRGNFRNQRKIIKCFNCGKEGHLARNCRAPRKKGCWKCGKEGHQMKDCNERQANFLREDLAFLQGKAREFSSEQTRANSPSRGELQVWGRDNNPLSEAGAERQGTVSFSFPQITLWQRPLVTLKIGGQLKEALLDTGADDTVLEEMNSPGRWKP.

Residue G2 is the site of N-myristoyl glycine; by host attachment. An interaction with Gp41 region spans residues V7–L31. The interaction with host CALM1 stretch occupies residues L8 to R43. Residues E12 to I19 are interaction with host AP3D1. The interval D14–H33 is interaction with membrane phosphatidylinositol 4,5-bisphosphate and RNA. The Nuclear export signal signature appears at W16–R22. Positions K26–K32 match the Nuclear localization signal motif. Residues E73 to S77 are interaction with membrane phosphatidylinositol 4,5-bisphosphate. The disordered stretch occupies residues E106–K127. A Phosphotyrosine; by host modification is found at Y132. The tract at residues N189–Q227 is interaction with human PPIA/CYPA and NUP153. A dimerization/Multimerization of capsid protein p24 region spans residues Y277 to L363. 2 CCHC-type zinc fingers span residues I390 to A407 and K411 to E428. Positions E447–Q481 are disordered. The segment covering S450–S459 has biased composition (polar residues). The segment at P489–L493 is dimerization of protease. The region spanning K508–P532 is the Peptidase A2 domain. D513 functions as the For protease activity; shared with dimeric partner in the catalytic mechanism.

Homotrimer; further assembles as hexamers of trimers. Interacts with gp41 (via C-terminus). Interacts with host CALM1; this interaction induces a conformational change in the Matrix protein, triggering exposure of the myristate group. Interacts with host AP3D1; this interaction allows the polyprotein trafficking to multivesicular bodies during virus assembly. Part of the pre-integration complex (PIC) which is composed of viral genome, matrix protein, Vpr and integrase. In terms of assembly, homodimer; the homodimer further multimerizes as homohexamers or homopentamers. Interacts with human PPIA/CYPA; This interaction stabilizes the capsid. Interacts with human NUP153. Interacts with host PDZD8; this interaction stabilizes the capsid. Interacts with monkey TRIM5; this interaction destabilizes the capsid. As to quaternary structure, homodimer, whose active site consists of two apposed aspartic acid residues. In terms of processing, specific enzymatic cleavages by the viral protease yield mature proteins. The protease is released by autocatalytic cleavage. The polyprotein is cleaved during and after budding, this process is termed maturation. Proteolytic cleavage of p66 RT removes the RNase H domain to yield the p51 RT subunit. Nucleocapsid protein p7 might be further cleaved after virus entry. Tyrosine phosphorylated presumably in the virion by a host kinase. Phosphorylation is apparently not a major regulator of membrane association. Post-translationally, phosphorylated possibly by host MAPK1; this phosphorylation is necessary for Pin1-mediated virion uncoating. In terms of processing, methylated by host PRMT6, impairing its function by reducing RNA annealing and the initiation of reverse transcription.

Its subcellular location is the host cell membrane. It localises to the host endosome. It is found in the host multivesicular body. The protein localises to the virion membrane. The protein resides in the host nucleus. Its subcellular location is the host cytoplasm. It localises to the virion. The enzyme catalyses Specific for a P1 residue that is hydrophobic, and P1' variable, but often Pro.. Its activity is regulated as follows. The viral protease is inhibited by many synthetic protease inhibitors (PIs), such as amprenavir, atazanavir, indinavir, loprinavir, nelfinavir, ritonavir and saquinavir. Use of protease inhibitors in tritherapy regimens permit more ambitious therapeutic strategies. Mediates, with Gag polyprotein, the essential events in virion assembly, including binding the plasma membrane, making the protein-protein interactions necessary to create spherical particles, recruiting the viral Env proteins, and packaging the genomic RNA via direct interactions with the RNA packaging sequence (Psi). Gag-Pol polyprotein may regulate its own translation, by the binding genomic RNA in the 5'-UTR. At low concentration, the polyprotein would promote translation, whereas at high concentration, the polyprotein would encapsidate genomic RNA and then shut off translation. Functionally, targets the polyprotein to the plasma membrane via a multipartite membrane-binding signal, that includes its myristoylated N-terminus. Matrix protein is part of the pre-integration complex. Implicated in the release from host cell mediated by Vpu. Binds to RNA. Its function is as follows. Forms the conical core that encapsulates the genomic RNA-nucleocapsid complex in the virion. Most core are conical, with only 7% tubular. The core is constituted by capsid protein hexamer subunits. The core is disassembled soon after virion entry. Host restriction factors such as TRIM5-alpha or TRIMCyp bind retroviral capsids and cause premature capsid disassembly, leading to blocks in reverse transcription. Capsid restriction by TRIM5 is one of the factors which restricts HIV-1 to the human species. Host PIN1 apparently facilitates the virion uncoating. On the other hand, interactions with PDZD8 or CYPA stabilize the capsid. In terms of biological role, encapsulates and protects viral dimeric unspliced genomic RNA (gRNA). Binds these RNAs through its zinc fingers. Acts as a nucleic acid chaperone which is involved in rearangement of nucleic acid secondary structure during gRNA retrotranscription. Also facilitates template switch leading to recombination. As part of the polyprotein, participates in gRNA dimerization, packaging, tRNA incorporation and virion assembly. Aspartyl protease that mediates proteolytic cleavages of Gag and Gag-Pol polyproteins during or shortly after the release of the virion from the plasma membrane. Cleavages take place as an ordered, step-wise cascade to yield mature proteins. This process is called maturation. Displays maximal activity during the budding process just prior to particle release from the cell. Also cleaves Nef and Vif, probably concomitantly with viral structural proteins on maturation of virus particles. Hydrolyzes host EIF4GI and PABP1 in order to shut off the capped cellular mRNA translation. The resulting inhibition of cellular protein synthesis serves to ensure maximal viral gene expression and to evade host immune response. Also mediates cleavage of host YTHDF3. Mediates cleavage of host CARD8, thereby activating the CARD8 inflammasome, leading to the clearance of latent HIV-1 in patient CD4(+) T-cells after viral reactivation; in contrast, HIV-1 can evade CARD8-sensing when its protease remains inactive in infected cells prior to viral budding. In Homo sapiens (Human), this protein is Gag-Pol polyprotein (gag-pol).